A 366-amino-acid polypeptide reads, in one-letter code: 5-hydroxytryptamine receptor 1F (366 aa).

At 1–24 the chain is on the extracellular side; the sequence is MDFLNASDQNLTSEELLNRMPSKI. Asn5 and Asn10 each carry an N-linked (GlcNAc...) asparagine glycan. A helical transmembrane segment spans residues 25–49; it reads LVSLTLSGLALMTTTINSLVIAAII. At 50 to 59 the chain is on the cytoplasmic side; that stretch reads VTRKLHHPAN. A helical transmembrane segment spans residues 60–81; the sequence is YLICSLAVTDFLVAVLVMPFSI. The Extracellular portion of the chain corresponds to 82–96; it reads VYIVRESWIMGQVLC. Cys96 and Cys172 are joined by a disulfide. A helical membrane pass occupies residues 97–119; sequence DIWLSVDIICCTCSILHLSAIAL. 2 residues coordinate serotonin: Asp103 and Cys107. The short motif at 120 to 122 is the DRY motif; important for ligand-induced conformation changes element; it reads DRY. The Cytoplasmic segment spans residues 120–139; that stretch reads DRYRAITDAVEYARKRTPRH. Residues 140–159 form a helical membrane-spanning segment; that stretch reads AGIMITIVWVISVFISMPPL. The Extracellular segment spans residues 160 to 178; the sequence is FWRHQGTSRDDECVIKHDH. Residues 179–202 form a helical membrane-spanning segment; that stretch reads IVSTIYSTFGAFYIPLVLILILYY. Residues 203–291 are Cytoplasmic-facing; the sequence is KIYRAARTLY…KISGTRERKA (89 aa). Residues 292-315 traverse the membrane as a helical segment; that stretch reads ATTLGLILGAFVICWLPFFVKELV. Over 316–327 the chain is Extracellular; the sequence is VNVCEKCKISEE. Residues 328–350 traverse the membrane as a helical segment; sequence MSNFLAWLGYLNSLINPLIYTIF. An NPxxY motif; important for ligand-induced conformation changes and signaling motif is present at residues 343-347; that stretch reads NPLIY. At 351 to 366 the chain is on the cytoplasmic side; that stretch reads NEDFKKAFQKLVRCRY.

It belongs to the G-protein coupled receptor 1 family. As to expression, detected in hippocampus.

It localises to the cell membrane. Its function is as follows. G-protein coupled receptor for 5-hydroxytryptamine (serotonin). Also functions as a receptor for various alkaloids and psychoactive substances. Ligand binding causes a conformation change that triggers signaling via guanine nucleotide-binding proteins (G proteins) and modulates the activity of downstream effectors, such as adenylate cyclase. HTR1F is coupled to G(i)/G(o) G alpha proteins and mediates inhibitory neurotransmission by inhibiting adenylate cyclase activity. In Mus musculus (Mouse), this protein is 5-hydroxytryptamine receptor 1F (Htr1f).